We begin with the raw amino-acid sequence, 468 residues long: MAKGSKGFIVSIMGPVVDVKFPEEELPDIYNALEVVNPQTGQKVVLEVEQLIGDGVVRTVAMDSTDGLTKGLEVVDTGAPITAPVGKEVLGRILNVIGEPVDEAGEIKAKERWPIHRPAPELVEQSTEIEILETGIKVIDLLAPFPKGGKIGFFGGAGVGKTVLVMELIRNIAIEHKGFSVFAGVGERTREGNELWLEMQESGVLGNTVLVFGQMNEPPGARFRVALTALTIAEYFRDVEGRDVLLFIDNIFRFVQAGSEVSALLGRMPSAVGYQPTLATDMGELQERITSTRRGSITSVQAIYVPADDITDPAPATTFAHLDATVVLSRRIAELGLYPAVDPLDSSSKILDPAIVGREHYEVARGVQEVLQRYKDLQDIIAILGVEELSPEDKLVVHRARRIQRFLSQPFHVAERFTGRPGRYVPIEETIRGFKEILDGKLDDVPEQAFLMAGNIDEVKERAKEMRS.

155–162 lines the ATP pocket; that stretch reads GGAGVGKT.

It belongs to the ATPase alpha/beta chains family. As to quaternary structure, F-type ATPases have 2 components, CF(1) - the catalytic core - and CF(0) - the membrane proton channel. CF(1) has five subunits: alpha(3), beta(3), gamma(1), delta(1), epsilon(1). CF(0) has three main subunits: a(1), b(2) and c(9-12). The alpha and beta chains form an alternating ring which encloses part of the gamma chain. CF(1) is attached to CF(0) by a central stalk formed by the gamma and epsilon chains, while a peripheral stalk is formed by the delta and b chains.

Its subcellular location is the cell inner membrane. The enzyme catalyses ATP + H2O + 4 H(+)(in) = ADP + phosphate + 5 H(+)(out). Its function is as follows. Produces ATP from ADP in the presence of a proton gradient across the membrane. The catalytic sites are hosted primarily by the beta subunits. The protein is ATP synthase subunit beta of Thermotoga petrophila (strain ATCC BAA-488 / DSM 13995 / JCM 10881 / RKU-1).